The sequence spans 386 residues: Caspase-1-A (386 aa).

The propeptide occupies 1–100 (MTAQLNKVRR…PPMAPVPIQE (100 aa)). In terms of domain architecture, CARD spans 22-88 (SDLLDDLREK…HKTLAKSLGL (67 aa)). Active-site residues include histidine 218 and cysteine 274. Positions 287–296 (DVASPPLEDD) are excised as a propeptide.

Belongs to the peptidase C14A family. In terms of assembly, heterotetramer that consists of two anti-parallel arranged heterodimers, each one formed by a 20 kDa (Caspase-1 subunit p20) and a 10 kDa (Caspase-1 subunit p10) subunit. As to quaternary structure, heterotetramer that consists of two anti-parallel arranged heterodimers, each one formed by a 20 kDa (Caspase-1 subunit p20) and a 10 kDa (Caspase-1 subunit p10) subunit. Can form a heterodimer with isoform epsilon which then has an inhibitory effect. Post-translationally, the two subunits are derived from the precursor sequence by an autocatalytic mechanism.

The protein localises to the cytoplasm. The protein resides in the cell membrane. It carries out the reaction Strict requirement for an Asp residue at position P1 and has a preferred cleavage sequence of Tyr-Val-Ala-Asp-|-.. Functionally, thiol protease involved in a variety of inflammatory processes by proteolytically cleaving other proteins, such as the precursors of the inflammatory cytokines interleukin-1 beta (IL1B) and interleukin 18 (IL18) as well as the pyroptosis inducer Gasdermin-D (GSDMD), into active mature peptides. Plays a key role in cell immunity as an inflammatory response initiator: once activated through formation of an inflammasome complex, it initiates a pro-inflammatory response through the cleavage of the two inflammatory cytokines IL1B and IL18, releasing the mature cytokines which are involved in a variety of inflammatory processes. Cleaves a tetrapeptide after an Asp residue at position P1. Also initiates pyroptosis, a programmed lytic cell death pathway, through cleavage of GSDMD. The sequence is that of Caspase-1-A (casp1-a) from Xenopus laevis (African clawed frog).